Reading from the N-terminus, the 235-residue chain is Probable ribonuclease P protein subunit 3 (235 aa).

This sequence belongs to the eukaryotic/archaeal RNase P protein component 3 family.

The protein resides in the nucleus. The catalysed reaction is Endonucleolytic cleavage of RNA, removing 5'-extranucleotides from tRNA precursor.. In terms of biological role, part of ribonuclease P, a protein complex that generates mature tRNA molecules by cleaving their 5'-ends. This chain is Probable ribonuclease P protein subunit 3, found in Schizosaccharomyces pombe (strain 972 / ATCC 24843) (Fission yeast).